A 232-amino-acid polypeptide reads, in one-letter code: Megakaryocyte and platelet inhibitory receptor G6b (232 aa).

A signal peptide spans 1–17 (MALVLQLLPLLLSKVQG). The Extracellular portion of the chain corresponds to 18-140 (NPEVSLEGNP…GSTHGSEYSK (123 aa)). Asn-32 and Asn-112 each carry an N-linked (GlcNAc...) asparagine glycan. Residues 141 to 161 (VLIPLLGFGLVLGLGALGLVW) traverse the membrane as a helical segment. At 162 to 232 (WRRSCVPPSH…DASTVYAVVV (71 aa)) the chain is on the cytoplasmic side. 2 consecutive short sequence motifs (ITIM motif) follow at residues 200–205 (LHYADL) and 226–231 (TVYAVV). Tyr-202 carries the phosphotyrosine modification.

Interacts (via ITIM motif) with PTPN6 and PTPN11. Binds to heparin. Post-translationally, N-glycosylated. May be O-glycosylated. In terms of processing, phosphorylated.

The protein localises to the cell membrane. Inhibitory receptor that acts as a critical regulator of hematopoietic lineage differentiation, megakaryocyte function and platelet production. Inhibits platelet aggregation and activation by agonists such as ADP and collagen-related peptide. This regulation of megakaryocate function as well as platelet production ann activation is done through the inhibition (via the 2 ITIM motifs) of the receptors CLEC1B and GP6:FcRgamma signaling. Appears to operate in a calcium-independent manner. This chain is Megakaryocyte and platelet inhibitory receptor G6b, found in Rattus norvegicus (Rat).